We begin with the raw amino-acid sequence, 492 residues long: Uridine-cytidine kinase D (492 aa).

Positions 36–56 (PLPKNKKDHDQSIESDSSFTR) are disordered. 117–124 (GPVGAGKT) lines the ATP pocket. The 171-residue stretch at 290-460 (EPVYVCKAKY…PQTFLYLYFK (171 aa)) folds into the CYTH domain. Positions 468-483 (PNYSKLKPNNTNSKIL) are enriched in low complexity. The segment at 468–492 (PNYSKLKPNNTNSKILKNNKDKKNL) is disordered.

This sequence belongs to the uridine kinase family.

It carries out the reaction uridine + ATP = UMP + ADP + H(+). It catalyses the reaction cytidine + ATP = CMP + ADP + H(+). It functions in the pathway pyrimidine metabolism; CTP biosynthesis via salvage pathway; CTP from cytidine: step 1/3. The protein operates within pyrimidine metabolism; UMP biosynthesis via salvage pathway; UMP from uridine: step 1/1. Catalyzes the conversion of uridine into uridine monophosphate and cytidine into cytidine monophosphate in the pyrimidine salvage pathway. The chain is Uridine-cytidine kinase D (udkD) from Dictyostelium discoideum (Social amoeba).